The chain runs to 411 residues: 2,3-bisphosphoglycerate-independent phosphoglycerate mutase (411 aa).

Belongs to the BPG-independent phosphoglycerate mutase family. A-PGAM subfamily.

It catalyses the reaction (2R)-2-phosphoglycerate = (2R)-3-phosphoglycerate. Its pathway is carbohydrate degradation; glycolysis; pyruvate from D-glyceraldehyde 3-phosphate: step 3/5. In terms of biological role, catalyzes the interconversion of 2-phosphoglycerate and 3-phosphoglycerate. In Pyrobaculum neutrophilum (strain DSM 2338 / JCM 9278 / NBRC 100436 / V24Sta) (Thermoproteus neutrophilus), this protein is 2,3-bisphosphoglycerate-independent phosphoglycerate mutase.